Reading from the N-terminus, the 98-residue chain is Large ribosomal subunit protein uL23 (98 aa).

It belongs to the universal ribosomal protein uL23 family. Part of the 50S ribosomal subunit. Contacts protein L29, and trigger factor when it is bound to the ribosome.

One of the early assembly proteins it binds 23S rRNA. One of the proteins that surrounds the polypeptide exit tunnel on the outside of the ribosome. Forms the main docking site for trigger factor binding to the ribosome. The chain is Large ribosomal subunit protein uL23 from Rickettsia prowazekii (strain Madrid E).